Reading from the N-terminus, the 170-residue chain is Photosystem II extrinsic protein V (170 aa).

An N-terminal signal peptide occupies residues 1–33 (MASVFSSLRRSLKGLLVLIPVLIGLAVTSPAQA). Heme c contacts are provided by C70, C73, H74, and H125.

The protein belongs to the cytochrome c family. PsbV subfamily. In terms of assembly, PSII is composed of 1 copy each of membrane proteins PsbA, PsbB, PsbC, PsbD, PsbE, PsbF, PsbH, PsbI, PsbJ, PsbK, PsbL, PsbM, PsbT, PsbX, PsbY, PsbZ, Psb30/Ycf12, peripheral proteins PsbO, CyanoQ (PsbQ), PsbU, PsbV and a large number of cofactors. It forms dimeric complexes. It depends on heme c as a cofactor.

It is found in the cellular thylakoid membrane. Functionally, one of the extrinsic, lumenal subunits of photosystem II (PSII). PSII is a light-driven water plastoquinone oxidoreductase, using light energy to abstract electrons from H(2)O, generating a proton gradient subsequently used for ATP formation. The extrinsic proteins stabilize the structure of photosystem II oxygen-evolving complex (OEC), the ion environment of oxygen evolution and protect the OEC against heat-induced inactivation. Low-potential cytochrome c that plays a role in the OEC of PSII. This is Photosystem II extrinsic protein V from Synechococcus sp. (strain CC9605).